The following is a 141-amino-acid chain: MAMTVHVDIVSAEEQIFSGLAEFVALPGEAGELGILPGHMPLMTRIKPGAVRVKRPDQAEEELVFVAGGILEVQPGLVTVLADTAIRGKDLDEAKALEAKRIAEEALKNQSTEIDYAKAQAELAEAIAQIAAIQKLRKRGH.

The protein belongs to the ATPase epsilon chain family. As to quaternary structure, F-type ATPases have 2 components, CF(1) - the catalytic core - and CF(0) - the membrane proton channel. CF(1) has five subunits: alpha(3), beta(3), gamma(1), delta(1), epsilon(1). CF(0) has three main subunits: a, b and c.

It is found in the cell inner membrane. In terms of biological role, produces ATP from ADP in the presence of a proton gradient across the membrane. This chain is ATP synthase epsilon chain, found in Aromatoleum aromaticum (strain DSM 19018 / LMG 30748 / EbN1) (Azoarcus sp. (strain EbN1)).